Reading from the N-terminus, the 326-residue chain is MATH domain and coiled-coil domain-containing protein At3g58370 (326 aa).

Positions 7 to 133 (DNKFTWVIKN…NGEVKIVVEI (127 aa)) constitute an MATH domain. The stretch at 259–312 (LRLDWLEKKLAEVKAKKKKVETGKARLQRAEEELQKLNQKCLELKAFLEKENAD) forms a coiled coil.

In Arabidopsis thaliana (Mouse-ear cress), this protein is MATH domain and coiled-coil domain-containing protein At3g58370.